Here is a 161-residue protein sequence, read N- to C-terminus: 2-C-methyl-D-erythritol 2,4-cyclodiphosphate synthase (161 aa).

D9 and H11 together coordinate a divalent metal cation. Residues 9–11 and 37–38 contribute to the 4-CDP-2-C-methyl-D-erythritol 2-phosphate site; these read DFH and HS. H45 serves as a coordination point for a divalent metal cation. 4-CDP-2-C-methyl-D-erythritol 2-phosphate contacts are provided by residues 59–61, 64–68, 135–138, and R145; these read DIG, FPDTD, and TTTE.

It belongs to the IspF family. Homotrimer. Requires a divalent metal cation as cofactor.

The catalysed reaction is 4-CDP-2-C-methyl-D-erythritol 2-phosphate = 2-C-methyl-D-erythritol 2,4-cyclic diphosphate + CMP. It participates in isoprenoid biosynthesis; isopentenyl diphosphate biosynthesis via DXP pathway; isopentenyl diphosphate from 1-deoxy-D-xylulose 5-phosphate: step 4/6. Functionally, involved in the biosynthesis of isopentenyl diphosphate (IPP) and dimethylallyl diphosphate (DMAPP), two major building blocks of isoprenoid compounds. Catalyzes the conversion of 4-diphosphocytidyl-2-C-methyl-D-erythritol 2-phosphate (CDP-ME2P) to 2-C-methyl-D-erythritol 2,4-cyclodiphosphate (ME-CPP) with a corresponding release of cytidine 5-monophosphate (CMP). This is 2-C-methyl-D-erythritol 2,4-cyclodiphosphate synthase from Leptospira interrogans serogroup Icterohaemorrhagiae serovar Lai (strain 56601).